Here is a 466-residue protein sequence, read N- to C-terminus: Collagenase 3 (466 aa).

The signal sequence occupies residues 1–13; sequence ATFFLLSWTHCWS. Residues 14–98 constitute a propeptide, activation peptide; sequence LPLPYGDDDD…PRCGVPDVGV (85 aa). Positions 89–96 match the Cysteine switch motif; that stretch reads PRCGVPDV. C91 provides a ligand contact to Zn(2+). N112 carries an N-linked (GlcNAc...) asparagine glycan. Residue D123 participates in Ca(2+) binding. An N-linked (GlcNAc...) asparagine glycan is attached at N147. Ca(2+) is bound at residue D157. H167 and D169 together coordinate Zn(2+). Positions 171–241 are interaction with TIMP2; that stretch reads YPFDGPSGLL…GALMFPIYTY (71 aa). Ca(2+)-binding residues include D174, G175, S177, and L179. Position 182 (H182) interacts with Zn(2+). Ca(2+) is bound by residues N189, G191, and D193. H195 contributes to the Zn(2+) binding site. Ca(2+) contacts are provided by D197, D198, and E200. H217 is a Zn(2+) binding site. The active site involves E218. Positions 221, 227, and 235 each coordinate Zn(2+). The interval 258 to 279 is disordered; it reads QSLYGPGDEDPNPKHPKTPEKC. The segment at 263–466 is interaction with collagen; the sequence is PGDEDPNPKH…VMPTNSLLWC (204 aa). Over residues 268 to 279 the composition is skewed to basic and acidic residues; the sequence is PNPKHPKTPEKC. 4 Hemopexin repeats span residues 276 to 325, 326 to 372, 374 to 422, and 423 to 466; these read PEKC…WPEL, PNHV…GFPK, VKRL…FPGI, and GDKV…LLWC. The cysteines at positions 279 and 466 are disulfide-linked. The Ca(2+) site is built by D286, I288, D330, and A332. Y361 bears the Phosphotyrosine; by PKDCC mark. Positions 378 and 380 each coordinate Ca(2+). Residue N404 is glycosylated (N-linked (GlcNAc...) asparagine). Ca(2+) is bound by residues D427 and V429.

Belongs to the peptidase M10A family. The cofactor is Ca(2+). Requires Zn(2+) as cofactor. The proenzyme is activated by removal of the propeptide; this cleavage can be effected by other matrix metalloproteinases, such as MMP2, MMP3 and MMP14 and may involve several cleavage steps. Cleavage can also be autocatalytic, after partial maturation by another protease or after treatment with 4-aminophenylmercuric acetate (APMA) (in vitro). Post-translationally, N-glycosylated. In terms of processing, tyrosine phosphorylated by PKDCC/VLK.

It is found in the secreted. It localises to the extracellular space. The protein localises to the extracellular matrix. Its function is as follows. Plays a role in the degradation of extracellular matrix proteins including fibrillar collagen, fibronectin, TNC and ACAN. Cleaves triple helical collagens, including type I, type II and type III collagen, but has the highest activity with soluble type II collagen. Can also degrade collagen type IV, type XIV and type X. May also function by activating or degrading key regulatory proteins, such as TGFB1 and CCN2. Plays a role in wound healing, tissue remodeling, cartilage degradation, bone development, bone mineralization and ossification. Required for normal embryonic bone development and ossification. Plays a role in the healing of bone fractures via endochondral ossification. Plays a role in wound healing, probably by a mechanism that involves proteolytic activation of TGFB1 and degradation of CCN2. Plays a role in keratinocyte migration during wound healing. May play a role in cell migration and in tumor cell invasion. The chain is Collagenase 3 (Mmp13) from Rattus norvegicus (Rat).